Here is a 441-residue protein sequence, read N- to C-terminus: Heat shock factor protein 4 (441 aa).

The DNA-binding element occupies 17-121; sequence NVPAFLTKLW…EHLLEHIKRK (105 aa). The tract at residues 130 to 205 is hydrophobic repeat HR-A/B; the sequence is TKVRQEDLSK…QMQSNSPSTV (76 aa).

This sequence belongs to the HSF family. In terms of tissue distribution, predominantly expressed in the eye.

The protein localises to the nucleus. Heat-shock transcription factor that specifically binds heat shock promoter elements (HSE). Required for denucleation and organelle rupture and degradation that occur during eye lens terminal differentiation, when fiber cells that compose the lens degrade all membrane-bound organelles in order to provide lens with transparency to allow the passage of light. In this process, may regulate denucleation of lens fiber cells in part by activating dnase1l1l and dnase2b transcription. May be involved in DNA repair through the transcriptional regulation of rad51. May up-regulate TP53 protein in lens fiber cells, possibly through protein stabilization. In the eye lens, controls the expression of alpha-crystallin B chain/CRYAB and consequently may be involved in the regulation of lysosomal acidification. This is Heat shock factor protein 4 from Danio rerio (Zebrafish).